We begin with the raw amino-acid sequence, 206 residues long: Small ribosomal subunit protein uS4 (206 aa).

Residues 96–156 (SRLDNVVYRM…EKSRNQSRIA (61 aa)) enclose the S4 RNA-binding domain.

The protein belongs to the universal ribosomal protein uS4 family. In terms of assembly, part of the 30S ribosomal subunit. Contacts protein S5. The interaction surface between S4 and S5 is involved in control of translational fidelity.

In terms of biological role, one of the primary rRNA binding proteins, it binds directly to 16S rRNA where it nucleates assembly of the body of the 30S subunit. Functionally, with S5 and S12 plays an important role in translational accuracy. The sequence is that of Small ribosomal subunit protein uS4 from Hydrogenovibrio crunogenus (strain DSM 25203 / XCL-2) (Thiomicrospira crunogena).